Reading from the N-terminus, the 167-residue chain is MSEVEFSHEYWMRHALTLAKRAWDEREVPVGAVLVHNNRVIGEGWNRPIGRHDPTAHAEIMALRQGGLVMQNYRLIDATLYVTLEPCVMCAGAMIHSRIGRVVFGARDAKTGAAGSLMDVLHHPGMNHRVEITEGILADECAALLSDFFRMRRQEIKAQKKAQSSTD.

A CMP/dCMP-type deaminase domain is found at 6 to 117 (FSHEYWMRHA…DAKTGAAGSL (112 aa)). Histidine 57 contacts Zn(2+). The active-site Proton donor is the glutamate 59. Residues cysteine 87 and cysteine 90 each coordinate Zn(2+).

Belongs to the cytidine and deoxycytidylate deaminase family. Homodimer. The cofactor is Zn(2+).

It catalyses the reaction adenosine(34) in tRNA + H2O + H(+) = inosine(34) in tRNA + NH4(+). In terms of biological role, catalyzes the deamination of adenosine to inosine at the wobble position 34 of tRNA(Arg2). Essential for cell viability. This Escherichia coli (strain K12) protein is tRNA-specific adenosine deaminase.